A 446-amino-acid chain; its full sequence is Dual specificity mitogen-activated protein kinase kinase 2 (446 aa).

Low complexity predominate over residues 27-42 (SSGSSAGLGFQGQSQQ). The disordered stretch occupies residues 27–51 (SSGSSAGLGFQGQSQQHSTVNSMQG). The region spanning 149 to 414 (LKDLGEIGRG…YKELLKHPFI (266 aa)) is the Protein kinase domain. ATP contacts are provided by residues 155-163 (IGRGAYGSV) and Lys-178. Asp-276 acts as the Proton acceptor in catalysis. Residue Ser-304 is modified to Phosphoserine; by RAF. Thr-308 carries the post-translational modification Phosphothreonine; by RAF.

This sequence belongs to the protein kinase superfamily. STE Ser/Thr protein kinase family. MAP kinase kinase subfamily. Post-translationally, MAPKK is itself dependent on Ser/Thr phosphorylation for activity catalyzed by MAP kinase kinase kinases. In terms of tissue distribution, expressed abundantly in the adult brain and muscle.

The enzyme catalyses L-seryl-[protein] + ATP = O-phospho-L-seryl-[protein] + ADP + H(+). It carries out the reaction L-threonyl-[protein] + ATP = O-phospho-L-threonyl-[protein] + ADP + H(+). It catalyses the reaction L-tyrosyl-[protein] + ATP = O-phospho-L-tyrosyl-[protein] + ADP + H(+). Functionally, catalyzes the concomitant phosphorylation of a threonine and a tyrosine residue in a Thr-Glu-Tyr sequence located in MAP kinases. This chain is Dual specificity mitogen-activated protein kinase kinase 2 (map2k2), found in Xenopus laevis (African clawed frog).